The primary structure comprises 467 residues: Receptor-like cytosolic serine/threonine-protein kinase RBK1 (467 aa).

Residues 1–24 show a composition bias toward basic and acidic residues; it reads MAVEDNKNSESKNHQEVELHRNDL. The tract at residues 1–73 is disordered; that stretch reads MAVEDNKNSE…PFSNTTKTVS (73 aa). A compositionally biased stretch (low complexity) spans 40–71; the sequence is SDSDNSSSSCSSCSSDDKSSSTSSPFSNTTKT. Threonine 142 bears the Phosphothreonine mark. Residues 153–430 form the Protein kinase domain; sequence FNPENMIGKG…LRGEDGPAEL (278 aa). ATP is bound by residues 159 to 167 and lysine 181; that span reads IGKGGHAEV. Residue aspartate 278 is the Proton acceptor of the active site. The residue at position 282 (serine 282) is a Phosphoserine. The residue at position 318 (threonine 318) is a Phosphothreonine. Phosphotyrosine is present on tyrosine 326.

This sequence belongs to the protein kinase superfamily. Ser/Thr protein kinase family. Interacts with ARAC5 and ARAC10. Mostly expressed in vasculature, hydathode endothem, leaf mesophyll cells and trichomes.

The protein resides in the cytoplasm. It is found in the endomembrane system. The protein localises to the nucleus. The catalysed reaction is L-seryl-[protein] + ATP = O-phospho-L-seryl-[protein] + ADP + H(+). It catalyses the reaction L-threonyl-[protein] + ATP = O-phospho-L-threonyl-[protein] + ADP + H(+). The protein is Receptor-like cytosolic serine/threonine-protein kinase RBK1 (RBK1) of Arabidopsis thaliana (Mouse-ear cress).